An 82-amino-acid polypeptide reads, in one-letter code: Putative membrane protein insertion efficiency factor (82 aa).

Belongs to the UPF0161 family.

Its subcellular location is the cell inner membrane. In terms of biological role, could be involved in insertion of integral membrane proteins into the membrane. The chain is Putative membrane protein insertion efficiency factor from Rickettsia felis (strain ATCC VR-1525 / URRWXCal2) (Rickettsia azadi).